Consider the following 325-residue polypeptide: uncharacterized protein (325 aa).

A disordered region spans residues 296–325; the sequence is QRTLSSSMEEADRPRRMSVTQPHLPPVPSA.

The protein belongs to the NDRG family.

This is an uncharacterized protein from Caenorhabditis elegans.